We begin with the raw amino-acid sequence, 401 residues long: MRRAPAAERLLELGFPPRCGRQEPPFPLGVTRGWGRWPIQKRREGARPVPFSERSQEDGRGPAARSSGTLWRIRTRLSLCRDPEPPPPLCLLRVSLLCALRAGGRGSRWGEDGARLLLLPPARAAGNGEAEPSGGPSYAGRMLESSGCKALKEGVLEKRSDGLLQLWKKKCCILTEEGLLLIPPKQLQHQQQQQQQQQQQQQQQPGQGPAEPSQPSGPAVASLEPPVKLKELHFSNMKTVDCVERKGKYMYFTVVMAEGKEIDFRCPQDQGWNAEITLQMVQYKNRQAILAVKSTRQKQQHLVQQQPPSQPQPQPQLQPQPQPQPQPQPQPQSQPQPQPQPKPQPQQLHPYPHPHPHPHSHPHSHPHPHPHPHPHQIPHPHPQPHSQPHGHRLLRSTSNSA.

Disordered stretches follow at residues 39 to 67 (IQKR…ARSS), 190 to 222 (QQQQ…AVAS), and 293 to 401 (KSTR…SNSA). The 133-residue stretch at 151–283 (LKEGVLEKRS…AEITLQMVQY (133 aa)) folds into the PH domain. Over residues 190–204 (QQQQQQQQQQQQQQQ) the composition is skewed to low complexity. Residues 308 to 344 (PSQPQPQPQLQPQPQPQPQPQPQPQSQPQPQPQPKPQ) are compositionally biased toward pro residues. Residues 311 to 346 (PQPQPQLQPQPQPQPQPQPQPQSQPQPQPQPKPQPQ) are 15 X 2 AA repeats of P-Q. The span at 352 to 378 (PHPHPHPHSHPHSHPHPHPHPHPHQIP) shows a compositional bias: basic residues. The tract at residues 352 to 389 (PHPHPHPHSHPHSHPHPHPHPHPHQIPHPHPQPHSQPH) is 14 X 2 AA repeats of P-H.

As to quaternary structure, interacts with RPL14, EIF3S7 and PABPC4. Widely expressed with highest levels in pancreas. Strongly expressed by benign melanocytic nevi, and progressively reduced expressed in primary and metastatic melanomas (at protein level).

Its subcellular location is the cytoplasm. It is found in the cytoplasmic vesicle. The protein resides in the nucleus. It localises to the nucleolus. Seems to be involved in regulation of apoptosis. May be involved in detachment-mediated programmed cell death. May mediate apoptosis during neuronal development. May be involved in regulation of anti-apoptotic effects of IGF1. May be involved in translational regulation. In Homo sapiens (Human), this protein is Pleckstrin homology-like domain family A member 1 (PHLDA1).